The following is a 128-amino-acid chain: Large ribosomal subunit protein mL52 (128 aa).

The transit peptide at 1-28 (MLQIAKLCLATSGRITAQRYVAVTTARA) directs the protein to the mitochondrion.

The protein belongs to the mitochondrion-specific ribosomal protein mL52 family. Component of the mitochondrial ribosome large subunit (39S) which comprises a 16S rRNA and about 50 distinct proteins.

The protein localises to the mitochondrion. The polypeptide is Large ribosomal subunit protein mL52 (mRpL52) (Drosophila pseudoobscura pseudoobscura (Fruit fly)).